We begin with the raw amino-acid sequence, 417 residues long: Glutamyl-tRNA reductase (417 aa).

Substrate-binding positions include 48–51 (TCNR), S100, 105–107 (EDQ), and Q111. The active-site Nucleophile is the C49. 180-185 (GAGETG) is a binding site for NADP(+).

It belongs to the glutamyl-tRNA reductase family. As to quaternary structure, homodimer.

The enzyme catalyses (S)-4-amino-5-oxopentanoate + tRNA(Glu) + NADP(+) = L-glutamyl-tRNA(Glu) + NADPH + H(+). It functions in the pathway porphyrin-containing compound metabolism; protoporphyrin-IX biosynthesis; 5-aminolevulinate from L-glutamyl-tRNA(Glu): step 1/2. Catalyzes the NADPH-dependent reduction of glutamyl-tRNA(Glu) to glutamate 1-semialdehyde (GSA). This chain is Glutamyl-tRNA reductase, found in Methanothrix thermoacetophila (strain DSM 6194 / JCM 14653 / NBRC 101360 / PT) (Methanosaeta thermophila).